We begin with the raw amino-acid sequence, 158 residues long: uncharacterized protein (158 aa).

The next 2 membrane-spanning stretches (helical) occupy residues 66 to 86 (LLII…PWIM) and 94 to 114 (FFSL…SLTI).

The protein localises to the membrane. This is an uncharacterized protein from Saccharomyces cerevisiae (strain ATCC 204508 / S288c) (Baker's yeast).